The primary structure comprises 199 residues: V-type ATP synthase subunit E (199 aa).

Belongs to the V-ATPase E subunit family.

In terms of biological role, produces ATP from ADP in the presence of a proton gradient across the membrane. This chain is V-type ATP synthase subunit E, found in Clostridium botulinum (strain Hall / ATCC 3502 / NCTC 13319 / Type A).